A 1273-amino-acid polypeptide reads, in one-letter code: MPLGRSSWICCAKYFVNTKSRFNEILPPRFTLIVSFYSMNTSENDPDGHYDFPEMTEHHSDRASSYANANNVNSTQPQLVSSEQALLAILGGGLQSITPNSVNQNAYSRSTYRTDGGLNSQPVSSLNNQWGNYNPAFLPSRYDSSFHPYTISQAANQPFPQHLLGNSNAGVAQQSGMRTIGLPPTVGSSFPQQKSSTYENFFDANSPSSQQFPSTYPSRSQNPLSSSGDGSTAIHAGPIQHQNSNAFSNYPYPLDASHLSSQQLLSMYRDQVSHGVTPSTFRNHESFMPTQLVSATELSKSVDNAVLPIPPTTAPAVVSPPASSFPLMSSAATSGNISSPALFDSELGARPEGSVAIEPSRVLLQWSSQSSSHTIPSAGASIPTSSLKSFFEHAAEAARKCNLDPRALESFEQHMLSDRLHDPVVLFHYFQIRNSICWLWIKNPTHAISRVEAQGVCVDRCLFQLASLAYEFLVRYGYINYGCLSFDSSFTNETNTGTTSSSASKQKTIAVVGAGLTGLICARQLTGLFSQYSSSFLSKNELPPKVIILEAKERTGGRIYSRALPVSHTSATQINHHTSNSNSISSNSTSLNPKDVTDPSHIPSAIDLGFQFLFSPMDDILLNLLNKQLGIEVTEMTGSDLVYDETDTKVLDMVEVKKLNILWEKLLEYVSVCFFINVEESVRISWISQFQLFIDEMFPDHLSKSLSLNASHEFSFKKTMLILIDEVSSYAKLGNSQKKFLIWCFKVAELDDTLYPLNTVDTDFSKDILIPKVARRGLSQLPWALQSYPSPLNIHYEKFVSKVTIENDKCTLDCKDNSSYEVDQVVIACSPSHFSSNIEFSPGLPNFVTENIKSIDFKPGKKVILRYAAAFWRKNIRSFGIIPKSLSQEMNNDENDGKSCFVLRIWNMLPETGVPILVADINPQMTSSSSNETSHLIQELHSLIVDHFQNDSNSSADLLDAWVTNWSRNGVYDGLNSYPNFANDKQQYEKRFRQSQLSYNLGRLHIAGDYIFSCVGCRTLQRSFLSGLSVCTGIIDSLAPISLTIPIIGETSRKELDQFLRNSKVNNFDPNAEAQRHLSYQARYRLKKQERLDEHKEEQEQLVTELLGYLPEPPSKPNANPFLLYQKMQWHVCRALADEDKRRLTGDSTAKATINETRAKLGKTWRQLDDLGKKPWIDEIAAQREAYAGKILRYQRLTKEYEMRAEQIRNDYAAKCQDEPIPDDEARLFMQAQREEEQRKQTQDDNISKSREASDEEYHDDGSSDSGYNGTRY.

Polar residues predominate over residues 199-230; it reads ENFFDANSPSSQQFPSTYPSRSQNPLSSSGDG. The disordered stretch occupies residues 199 to 237; it reads ENFFDANSPSSQQFPSTYPSRSQNPLSSSGDGSTAIHAG. Positions 247-307 form a coiled coil; that stretch reads FSNYPYPLDA…LSKSVDNAVL (61 aa). The region spanning 394–490 is the SWIRM domain; the sequence is AAEAARKCNL…YGCLSFDSSF (97 aa). FAD-binding positions include 509 to 551, Thr517, Glu550, Arg558, and 572 to 573; these read IAVV…ILEA and TQ. The segment at 542–1198 is demethylase activity; the sequence is LPPKVIILEA…GKILRYQRLT (657 aa). Residues 571–596 are disordered; that stretch reads ATQINHHTSNSNSISSNSTSLNPKDV. The span at 574–590 shows a compositional bias: low complexity; sequence INHHTSNSNSISSNSTS. The stretch at 681–767 forms a coiled coil; sequence SVRISWISQF…NTVDTDFSKD (87 aa). Residues 1115–1195 constitute a DNA-binding region (HMG box); it reads SKPNANPFLL…AYAGKILRYQ (81 aa). FAD is bound by residues Asp1147 and 1156 to 1157; that span reads ET. Positions 1215 to 1273 are disordered; it reads KCQDEPIPDDEARLFMQAQREEEQRKQTQDDNISKSREASDEEYHDDGSSDSGYNGTRY. Residues 1233–1253 show a composition bias toward basic and acidic residues; sequence QREEEQRKQTQDDNISKSREA. Polar residues predominate over residues 1264–1273; the sequence is SDSGYNGTRY.

This sequence belongs to the flavin monoamine oxidase family. As to quaternary structure, component of the SWM histone demethylase complex composed of at least lsd1, lsd2, phf1 and phf2. Interacts directly with lsd1. FAD serves as cofactor.

The protein localises to the nucleus. In terms of biological role, catalytic component of the SWM histone demethylase complex that specifically demethylates H3K9me2, a specific tag for epigenetic transcriptional activation, thereby acting as a corepressor. Acts by oxidizing the substrate by FAD to generate the corresponding imine that is subsequently hydrolyzed. Has a role in regulating heterochromatin propagation and euchromatic transcription. Also has a gene activating role. The sequence is that of Lysine-specific histone demethylase 2 (lsd2) from Schizosaccharomyces pombe (strain 972 / ATCC 24843) (Fission yeast).